Here is a 255-residue protein sequence, read N- to C-terminus: Sorbose reductase sou1 (255 aa).

NADP(+)-binding residues include Ile21 and Asn95. Residues Ser148 and Tyr163 each act as proton donor in the active site. NADP(+) is bound by residues Tyr163, Lys167, Ile195, and Thr197. Lys167 acts as the Lowers pKa of active site Tyr in catalysis.

It belongs to the short-chain dehydrogenases/reductases (SDR) family.

It catalyses the reaction D-sorbitol + NADP(+) = keto-L-sorbose + NADPH + H(+). Its function is as follows. Catalyzes the NADP dependent reduction of L-sorbose to D-glucitol. The protein is Sorbose reductase sou1 (sou1) of Schizosaccharomyces pombe (strain 972 / ATCC 24843) (Fission yeast).